A 713-amino-acid polypeptide reads, in one-letter code: Probable glutamate carboxypeptidase VP8 (713 aa).

At Met1–Pro10 the chain is on the cytoplasmic side. A helical; Signal-anchor for type II membrane protein membrane pass occupies residues Pro11–Leu31. Topologically, residues His32–Pro713 are extracellular. Asn66 and Asn311 each carry an N-linked (GlcNAc...) asparagine glycan. The interval Ala245–Leu539 is catalytic. Residues His345 and Asp355 each contribute to the Zn(2+) site. Residue Glu392 is the Nucleophile of the active site. Zn(2+)-binding residues include Glu393, Asp421, and His505. Asn667 and Asn706 each carry an N-linked (GlcNAc...) asparagine glycan.

This sequence belongs to the peptidase M28 family. M28B subfamily. The cofactor is Zn(2+).

It localises to the cell membrane. The catalysed reaction is Release of an unsubstituted, C-terminal glutamyl residue, typically from Ac-Asp-Glu or folylpoly-gamma-glutamates.. Its function is as follows. Involved in the regulation of meristem development and seed maturation processes. Mediates regulation of embryonic regulatory genes and genes controlling abscisic acid (ABA) biosynthesis and turnover in developing seeds. May be required for the synthesis of small signaling molecules that integrates meristem and embryo formation in seeds. This chain is Probable glutamate carboxypeptidase VP8, found in Zea mays (Maize).